The primary structure comprises 691 residues: Inactive TPR repeat-containing thioredoxin TTL3 (691 aa).

2 disordered regions span residues 1-153 (MSHS…AVSP) and 174-209 (MASRTSSRTETLCTGTGNYGHGNVVRSGGGGGTSGK). Position 8 is a phosphoserine (Ser-8). Residues 19–39 (RFRDLQRNDDDVNKPDFRELD) show a composition bias toward basic and acidic residues. 2 positions are modified to phosphoserine: Ser-42 and Ser-45. A compositionally biased stretch (low complexity) spans 51–79 (GSASSSAAATPTSSSGSSGSASGKPSVSS). The segment covering 83-93 (KRLDDAYKSHS) has biased composition (basic and acidic residues). 3 stretches are compositionally biased toward polar residues: residues 94-108 (GELSSPGSGMPTTTR), 118-140 (SSTGTPLIFSGSSFTSATSHTSP), and 175-189 (ASRTSSRTETLCTGT). TPR repeat units lie at residues 220–253 (PEELKRMGNDMYRRGSFSEALSLYDRAILISPGN), 255–287 (AYRSNRAAALTALRRLGEAVKECLEAVRIDPSY), 289–321 (RAHQRLASLYLRLGEAENARRHICFSGQCPDQA), 327–362 (QTLEKHLRRCWEARKIGDWKTAIKETDAAIANGADS), 412–445 (AYVLCIQAQVDMALGRFENAVVKAERAAMLDQTN), 458–491 (VVRARTRGNELFSSGRFSEACVAYGDGLKQDDSN), 492–525 (SVLYCNRAACWYKLGLWEKSVEDCNHALKSQPSY), and 527–559 (KALLRRAASYGKLGRWEDAVKDYEFLRRELPGD). Positions 596–683 (DKFKKSVALP…MVCPSHQFLE (88 aa)) constitute a Thioredoxin domain.

Interacts with BRL2. As to expression, expressed in embryos and organ primordia in shoot and root. In primary and cauline leaves and petals, is expressed in hydathodes, guard cells, petiole cells and cells associated with differentiating vascular bundles.

In terms of biological role, involved in osmotic and salt stress tolerance. May play a role in the control of meristematic cell size during osmotic stress. May function as an adapter protein for BRL2 and may be required for signaling affecting leaf vascular tissue pattern formation. This chain is Inactive TPR repeat-containing thioredoxin TTL3, found in Arabidopsis thaliana (Mouse-ear cress).